Consider the following 257-residue polypeptide: Imidazole glycerol phosphate synthase subunit HisF (257 aa).

Catalysis depends on residues D11 and D130.

This sequence belongs to the HisA/HisF family. As to quaternary structure, heterodimer of HisH and HisF.

The protein resides in the cytoplasm. It catalyses the reaction 5-[(5-phospho-1-deoxy-D-ribulos-1-ylimino)methylamino]-1-(5-phospho-beta-D-ribosyl)imidazole-4-carboxamide + L-glutamine = D-erythro-1-(imidazol-4-yl)glycerol 3-phosphate + 5-amino-1-(5-phospho-beta-D-ribosyl)imidazole-4-carboxamide + L-glutamate + H(+). The protein operates within amino-acid biosynthesis; L-histidine biosynthesis; L-histidine from 5-phospho-alpha-D-ribose 1-diphosphate: step 5/9. Functionally, IGPS catalyzes the conversion of PRFAR and glutamine to IGP, AICAR and glutamate. The HisF subunit catalyzes the cyclization activity that produces IGP and AICAR from PRFAR using the ammonia provided by the HisH subunit. In Aliivibrio fischeri (strain ATCC 700601 / ES114) (Vibrio fischeri), this protein is Imidazole glycerol phosphate synthase subunit HisF.